The sequence spans 49 residues: Large ribosomal subunit protein bL33C (49 aa).

The tract at residues 21-49 is disordered; the sequence is KNKRNNPDRVEFKKYCPRDKKSTLHRETK. Residues 25-49 are compositionally biased toward basic and acidic residues; that stretch reads NNPDRVEFKKYCPRDKKSTLHRETK.

This sequence belongs to the bacterial ribosomal protein bL33 family.

The sequence is that of Large ribosomal subunit protein bL33C from Bacillus licheniformis (strain ATCC 14580 / DSM 13 / JCM 2505 / CCUG 7422 / NBRC 12200 / NCIMB 9375 / NCTC 10341 / NRRL NRS-1264 / Gibson 46).